We begin with the raw amino-acid sequence, 605 residues long: Protein spinster (605 aa).

The disordered stretch occupies residues M1–P94. Low complexity predominate over residues S27 to E38. Positions T55–T67 are enriched in polar residues. A compositionally biased stretch (basic residues) spans R76–H85. A helical membrane pass occupies residues F115–V137. An N-linked (GlcNAc...) asparagine glycan is attached at N149. The next 5 membrane-spanning stretches (helical) occupy residues G153–L173, P180–M200, F203–I223, M240–S260, and W271–K291. N319 carries N-linked (GlcNAc...) asparagine glycosylation. The next 5 membrane-spanning stretches (helical) occupy residues F329–L349, F367–L387, V401–V421, L431–L451, and F465–I485. N519 is a glycosylation site (N-linked (GlcNAc...) asparagine). A helical transmembrane segment spans residues S558–I578. N583 carries an N-linked (GlcNAc...) asparagine glycan.

Belongs to the major facilitator superfamily. Spinster (TC 2.A.1.49) family. As to expression, enriched in brain (at protein level).

The protein localises to the late endosome membrane. The protein resides in the lysosome membrane. Functionally, probable sphingolipid transporter that plays a central role in endosomes and/or lysosomes storage. Involved in TGF-beta-mediated synaptic growth regulation both pre- and postsynaptically via its function in endosomal storage regulation. Also required during oogenesis by regulating yolk spheres storage. This chain is Protein spinster (spin), found in Drosophila melanogaster (Fruit fly).